Consider the following 341-residue polypeptide: Calcium-binding protein 39 (341 aa).

The protein belongs to the Mo25 family. As to quaternary structure, component of a trimeric complex composed of STK11/LKB1, STRAD (STRADA or STRADB) and CAB39/MO25 (CAB39/MO25alpha or CAB39L/MO25beta): the complex tethers STK11/LKB1 in the cytoplasm and stimulates its catalytic activity.

It is found in the cytoplasm. In terms of biological role, component of a complex that binds and activates STK11/LKB1. In the complex, required to stabilize the interaction between CAB39/MO25 (CAB39/MO25alpha or CAB39L/MO25beta) and STK11/LKB1. This chain is Calcium-binding protein 39 (CAB39), found in Bos taurus (Bovine).